A 595-amino-acid polypeptide reads, in one-letter code: DNA mismatch repair protein MutL (595 aa).

The protein belongs to the DNA mismatch repair MutL/HexB family.

This protein is involved in the repair of mismatches in DNA. It is required for dam-dependent methyl-directed DNA mismatch repair. May act as a 'molecular matchmaker', a protein that promotes the formation of a stable complex between two or more DNA-binding proteins in an ATP-dependent manner without itself being part of a final effector complex. The protein is DNA mismatch repair protein MutL of Rhodopseudomonas palustris (strain ATCC BAA-98 / CGA009).